The sequence spans 362 residues: MYVKELFVDNFRNLQKQKIEFCEGINIFYGLNAQGKSNLLESIRLLSMGRSFRGSKTTELIKFGEDYFYVKAIICQENNDKKIEFGYKKNENKVIKVNGNKIKSTSELLGQLLTVIFSPEDLNIIKEGPSHRRKYLDSCISVVEKNYLYNLMQYNKILMNRNKLLKSIKEGKSKSILEIFDDQLVEYGAKIIVMRQNYLKNVEINIKKFLLEISNETAEIVYLNSVGLKDASDEEIVKKRLKEKLSKNIDVDLRYFTTQVGPHREDFKIIINGYDSRVYSSQGQQRTAALCLKLSEFEILKKETSEKPVLLLDDVMSELDENRKKYVLERLKGFQTFITHTTKRDLKGDCYFKISNGVVIKE.

30–37 is an ATP binding site; sequence GLNAQGKS.

The protein belongs to the RecF family.

It is found in the cytoplasm. In terms of biological role, the RecF protein is involved in DNA metabolism; it is required for DNA replication and normal SOS inducibility. RecF binds preferentially to single-stranded, linear DNA. It also seems to bind ATP. This Thermoanaerobacter sp. (strain X514) protein is DNA replication and repair protein RecF.